Here is a 255-residue protein sequence, read N- to C-terminus: MIEEAPRIIAHSRFLIAFTGAGVSAESGIPTFRDRGGLWENYRIEEVATPEAFRKDPNLVWSFYKMRMKIMKGAKPNNAHLALAELEKMGILKAVITQNIDNLHREAGNQHIVELHGNIYRVKCTRCDYMENLLESGKLEDFLKEKNLPKCPECASLLRPDVVWFGEPLPQEALQKAFKLAERADVCLVVGTSAQVFPAAYVPYIVKDNGGSVIEINTKESGITPIADVFIRGKAGEVMQSLLVKVKRCLENKKC.

In terms of domain architecture, Deacetylase sirtuin-type spans 1 to 253; the sequence is MIEEAPRIIA…VKVKRCLENK (253 aa). An NAD(+)-binding site is contributed by 20–39; that stretch reads GAGVSAESGIPTFRDRGGLW. Substrate contacts are provided by Tyr-64 and Arg-67. 98–101 is a binding site for NAD(+); it reads QNID. His-116 acts as the Proton acceptor in catalysis. Residues Cys-124, Cys-127, Cys-151, and Cys-154 each coordinate Zn(2+). NAD(+) is bound by residues 191-193, 217-219, and Ala-235; these read GTS and NTK.

This sequence belongs to the sirtuin family. Class III subfamily. Requires Zn(2+) as cofactor.

It is found in the cytoplasm. It catalyses the reaction N(6)-acetyl-L-lysyl-[protein] + NAD(+) + H2O = 2''-O-acetyl-ADP-D-ribose + nicotinamide + L-lysyl-[protein]. It carries out the reaction N(6)-succinyl-L-lysyl-[protein] + NAD(+) + H2O = 2''-O-succinyl-ADP-D-ribose + nicotinamide + L-lysyl-[protein]. Its function is as follows. NAD-dependent lysine deacetylase and desuccinylase that specifically removes acetyl and succinyl groups on target proteins. Modulates the activities of several proteins which are inactive in their acylated form. Deacetylates the N-terminal lysine residue of Alba, the major archaeal chromatin protein and that, in turn, increases Alba's DNA binding affinity, thereby repressing transcription. This Thermococcus sibiricus (strain DSM 12597 / MM 739) protein is NAD-dependent protein deacylase.